An 862-amino-acid chain; its full sequence is DNA mismatch repair protein MutS (862 aa).

608-615 is a binding site for ATP; sequence GPNMAGKS.

Belongs to the DNA mismatch repair MutS family.

In terms of biological role, this protein is involved in the repair of mismatches in DNA. It is possible that it carries out the mismatch recognition step. This protein has a weak ATPase activity. The chain is DNA mismatch repair protein MutS from Bacteroides fragilis (strain YCH46).